Here is a 338-residue protein sequence, read N- to C-terminus: Methionyl-tRNA formyltransferase (338 aa).

110-113 contributes to the (6S)-5,6,7,8-tetrahydrofolate binding site; that stretch reads SLLP.

Belongs to the Fmt family.

The enzyme catalyses L-methionyl-tRNA(fMet) + (6R)-10-formyltetrahydrofolate = N-formyl-L-methionyl-tRNA(fMet) + (6S)-5,6,7,8-tetrahydrofolate + H(+). In terms of biological role, attaches a formyl group to the free amino group of methionyl-tRNA(fMet). The formyl group appears to play a dual role in the initiator identity of N-formylmethionyl-tRNA by promoting its recognition by IF2 and preventing the misappropriation of this tRNA by the elongation apparatus. The sequence is that of Methionyl-tRNA formyltransferase from Parasynechococcus marenigrum (strain WH8102).